The chain runs to 211 residues: Large ribosomal subunit protein eL13 (211 aa).

It belongs to the eukaryotic ribosomal protein eL13 family. As to quaternary structure, component of the 60S large ribosomal subunit (LSU).

It localises to the cytoplasm. In terms of biological role, component of the ribosome, a large ribonucleoprotein complex responsible for the synthesis of proteins in the cell. The small ribosomal subunit (SSU) binds messenger RNAs (mRNAs) and translates the encoded message by selecting cognate aminoacyl-transfer RNA (tRNA) molecules. The large subunit (LSU) contains the ribosomal catalytic site termed the peptidyl transferase center (PTC), which catalyzes the formation of peptide bonds, thereby polymerizing the amino acids delivered by tRNAs into a polypeptide chain. The nascent polypeptides leave the ribosome through a tunnel in the LSU and interact with protein factors that function in enzymatic processing, targeting, and the membrane insertion of nascent chains at the exit of the ribosomal tunnel. As part of the LSU, it is probably required for its formation and the maturation of rRNAs. The protein is Large ribosomal subunit protein eL13 (rpl13) of Ictalurus punctatus (Channel catfish).